Here is a 488-residue protein sequence, read N- to C-terminus: 3-octaprenyl-4-hydroxybenzoate carboxy-lyase (488 aa).

Asn172 contributes to the Mn(2+) binding site. Prenylated FMN contacts are provided by residues Ile175 to Arg177, Arg189 to Leu191, and Arg194 to Gly195. Glu238 contacts Mn(2+). Catalysis depends on Asp287, which acts as the Proton donor.

It belongs to the UbiD family. Homohexamer. Requires prenylated FMN as cofactor. It depends on Mn(2+) as a cofactor.

It is found in the cell membrane. The catalysed reaction is a 4-hydroxy-3-(all-trans-polyprenyl)benzoate + H(+) = a 2-(all-trans-polyprenyl)phenol + CO2. The protein operates within cofactor biosynthesis; ubiquinone biosynthesis. In terms of biological role, catalyzes the decarboxylation of 3-octaprenyl-4-hydroxy benzoate to 2-octaprenylphenol, an intermediate step in ubiquinone biosynthesis. The sequence is that of 3-octaprenyl-4-hydroxybenzoate carboxy-lyase from Legionella pneumophila (strain Corby).